The following is a 329-amino-acid chain: uncharacterized protein (329 aa).

To type I restriction system adenine methylases.

This is an uncharacterized protein from Bacillus subtilis (strain 168).